Consider the following 303-residue polypeptide: Bifunctional protein FolD (303 aa).

NADP(+)-binding positions include 165 to 167 (GRS), Ser190, and Ile231.

Belongs to the tetrahydrofolate dehydrogenase/cyclohydrolase family. Homodimer.

It carries out the reaction (6R)-5,10-methylene-5,6,7,8-tetrahydrofolate + NADP(+) = (6R)-5,10-methenyltetrahydrofolate + NADPH. The enzyme catalyses (6R)-5,10-methenyltetrahydrofolate + H2O = (6R)-10-formyltetrahydrofolate + H(+). The protein operates within one-carbon metabolism; tetrahydrofolate interconversion. Functionally, catalyzes the oxidation of 5,10-methylenetetrahydrofolate to 5,10-methenyltetrahydrofolate and then the hydrolysis of 5,10-methenyltetrahydrofolate to 10-formyltetrahydrofolate. This is Bifunctional protein FolD from Prochlorococcus marinus (strain NATL1A).